Reading from the N-terminus, the 367-residue chain is Putative isomerase YraM (367 aa).

It belongs to the PrpF family.

The chain is Putative isomerase YraM (yraM) from Bacillus subtilis (strain 168).